A 143-amino-acid chain; its full sequence is Hemoglobin subunit alpha-1 (143 aa).

Ser-2 is subject to N-acetylserine. The Globin domain occupies 2–143 (SLSAKDKATV…LALALCEKYR (142 aa)). His-60 contributes to the O2 binding site. Residue His-89 coordinates heme b.

This sequence belongs to the globin family. In terms of assembly, hb 1 is a heterotetramer of two alpha-1 and two beta-1 chains. In terms of tissue distribution, red blood cells.

In terms of biological role, involved in oxygen transport from gills to the various peripheral tissues. The polypeptide is Hemoglobin subunit alpha-1 (hba1) (Boreogadus saida (Polar cod)).